Reading from the N-terminus, the 156-residue chain is Endoribonuclease YbeY (156 aa).

Zn(2+)-binding residues include H111, H115, and H121.

Belongs to the endoribonuclease YbeY family. Zn(2+) serves as cofactor.

The protein resides in the cytoplasm. Single strand-specific metallo-endoribonuclease involved in late-stage 70S ribosome quality control and in maturation of the 3' terminus of the 16S rRNA. In Hahella chejuensis (strain KCTC 2396), this protein is Endoribonuclease YbeY.